We begin with the raw amino-acid sequence, 466 residues long: 3-isopropylmalate dehydratase large subunit (466 aa).

Residues cysteine 347, cysteine 407, and cysteine 410 each coordinate [4Fe-4S] cluster.

This sequence belongs to the aconitase/IPM isomerase family. LeuC type 1 subfamily. In terms of assembly, heterodimer of LeuC and LeuD. Requires [4Fe-4S] cluster as cofactor.

It carries out the reaction (2R,3S)-3-isopropylmalate = (2S)-2-isopropylmalate. It functions in the pathway amino-acid biosynthesis; L-leucine biosynthesis; L-leucine from 3-methyl-2-oxobutanoate: step 2/4. Functionally, catalyzes the isomerization between 2-isopropylmalate and 3-isopropylmalate, via the formation of 2-isopropylmaleate. The polypeptide is 3-isopropylmalate dehydratase large subunit (Escherichia coli O139:H28 (strain E24377A / ETEC)).